A 28-amino-acid polypeptide reads, in one-letter code: Potassium channel toxin alpha-KTx 13.2 (28 aa).

Intrachain disulfides connect C2-C19, C6-C24, and C10-C26. Positions 17–24 (IKCINGSC) are interaction with Ca(2+)-activated K(+) channels.

The protein belongs to the short scorpion toxin superfamily. Potassium channel inhibitor family. Alpha-KTx 13 subfamily. Expressed by the venom gland.

Its subcellular location is the secreted. Its function is as follows. Potent and selective inhibitor of Kv1.2/KCNA2 potassium channels. This chain is Potassium channel toxin alpha-KTx 13.2, found in Orthochirus scrobiculosus (Central Asian scorpion).